The chain runs to 563 residues: MTPPGAPKYVIGVDFGTLSGRALVVRVADGAEMGSAEHTYRHGVVTEALPGHPEVRLPADYALQVPADYIDVLRFAIPEAVANAGIDPADVVGLGTDFTACTMVAATSDGTPLCQLDEFADRPHAYAKLWRHHAAQPQADRINALAAARGETWLPRYGGLISSEWEFAKGLQILEEDPEIYAAIDRWVEGADWIVWQLTGRYVRNISTAGYKAIRQDGKYPSRAFLAELNPGFASFVEDKIEQPIGRLGEAAGTLTAQAAAWTGLPEGIVVAVGNIDAHVTAAAADAADPGRLIAIMGTSTCHVMNGRFLREVPGMCGVVDGGITDGLWGYEAGQSGVGDIFAWFTKNCVPKEIAIEASRRGLTLHEHLSELAAEQEVGEHGLVALDWHSGNRSVLVDHHLSGIMVGQTLDTTCVDQYRALLEATAFGTRMIVETFQRSGVPVEELVVAGGLIKNPLLMQIYADVTGLPLSCVTSTQAPALGAAIHAAAAAGEYRDVPTASARMGGRTKNAFTPIPENVTRYNALYAAYVELHDWFGRNNPLMRRLRVMRSNAERRETVGSAQ.

Belongs to the ribulokinase family.

It catalyses the reaction D-ribulose + ATP = D-ribulose 5-phosphate + ADP + H(+). It carries out the reaction L-ribulose + ATP = L-ribulose 5-phosphate + ADP + H(+). It functions in the pathway carbohydrate degradation; L-arabinose degradation via L-ribulose; D-xylulose 5-phosphate from L-arabinose (bacterial route): step 2/3. This is Ribulokinase from Mycolicibacterium smegmatis (Mycobacterium smegmatis).